The primary structure comprises 155 residues: Zinc finger HIT domain-containing protein 3 (155 aa).

Positions 11, 14, 22, 25, 30, 34, 38, and 42 each coordinate Zn(2+). The HIT-type zinc finger occupies 11 to 42 (CVICLEKPKYRCPACRVPYCSVVCFRKHKEQC). Ser80 bears the Phosphoserine mark.

Thyroid receptor interacting proteins (TRIPs) specifically interact with the ligand binding domain of the thyroid receptor (TR). Requires the presence of thyroid hormone for its interaction. Interacts with NUFIP1. Interacts (via HIT-type zinc finger) with the RUVBL1/RUVBL2 complex in the presence of ADP.

The protein resides in the cytoplasm. Its subcellular location is the nucleus. This Homo sapiens (Human) protein is Zinc finger HIT domain-containing protein 3 (ZNHIT3).